We begin with the raw amino-acid sequence, 91 residues long: Small ribosomal subunit protein bS16 (91 aa).

The protein belongs to the bacterial ribosomal protein bS16 family.

This is Small ribosomal subunit protein bS16 from Staphylococcus aureus (strain Mu3 / ATCC 700698).